Reading from the N-terminus, the 746-residue chain is Histone-lysine N-methyltransferase EZH2 (746 aa).

The interval 1–340 (MGQTGKKSEK…AKEFAAALTA (340 aa)) is interaction with DNMT1, DNMT3A and DNMT3B. Serine 21 carries the phosphoserine; by PKB/AKT1 modification. Residues 39–68 (KSMFSSNRQKILERTEILNQEWKQRRIQPV) form an interaction with EED region. Serine 75 is a glycosylation site (O-linked (GlcNAc) serine). Position 76 is a phosphoserine (serine 76). Residues 180–222 (QYNDDDDDDDGDDPEEREEKQKDLEDHRDDKESRPPRKFPSDK) form a disordered region. Positions 182–195 (NDDDDDDDGDDPEE) are enriched in acidic residues. Residues 196-222 (REEKQKDLEDHRDDKESRPPRKFPSDK) are compositionally biased toward basic and acidic residues. The segment at 329-522 (EGAKEFAAAL…SSNHVYNYQP (194 aa)) is interaction with CDYL. The residue at position 339 (threonine 339) is a Phosphothreonine. Residues 340-426 (AERIKTPPKR…PIKMKPNIEP (87 aa)) form a disordered region. The residue at position 345 (threonine 345) is a Phosphothreonine; by CDK1 and CDK2. Over residues 345-357 (TPPKRPGGRRRGR) the composition is skewed to basic residues. Phosphoserine occurs at positions 363 and 366. Threonine 367 carries the phosphothreonine modification. The span at 374–385 (ESKDTDSDREAG) shows a compositional bias: basic and acidic residues. Residue threonine 487 is modified to Phosphothreonine. Residues 503-605 (CRKIQLKKDG…SKNVSCKNCS (103 aa)) form the CXC domain. The SET domain maps to 612–727 (KHLLLAPSDV…TGEELFFDYR (116 aa)). Lysine 634 participates in a covalent cross-link: Glycyl lysine isopeptide (Lys-Gly) (interchain with G-Cter in SUMO2).

Belongs to the class V-like SAM-binding methyltransferase superfamily. Histone-lysine methyltransferase family. EZ subfamily. As to quaternary structure, component of the PRC2/EED-EZH2 complex, which includes EED, EZH2, SUZ12, RBBP4 and RBBP7 and possibly AEBP2. The minimum components required for methyltransferase activity of the PRC2/EED-EZH2 complex are EED, EZH2 and SUZ12. The PRC2 complex may also interact with DNMT1, DNMT3A, DNMT3B and PHF1 via the EZH2 subunit and with SIRT1 via the SUZ12 subunit. Interacts with HDAC1 and HDAC2. Binds ATRX via the SET domain. Interacts with PRAME. Interacts with CDYL. Interacts with CLOCK, BMAL1 and CRY1. Interacts with DNMT3L; the interaction is direct. Interacts with EZHIP; the interaction blocks EZH2 methyltransferase activity. Interacts with ZNF263; recruited to the SIX3 promoter along with other proteins involved in chromatin modification and transcriptional corepression where it contributes to transcriptional repression. Interacts with ARMC12. Interacts with ZMYND8; the interaction is dependent on the presence of chromatin. Interacts with DDX18; this interaction inhibits the PRC2 complex. Phosphorylated by AKT1. Phosphorylation by AKT1 reduces methyltransferase activity. Phosphorylation at Thr-345 by CDK1 and CDK2 promotes maintenance of H3K27me3 levels at EZH2-target loci, thus leading to epigenetic gene silencing. Post-translationally, sumoylated. In terms of processing, glycosylated: O-GlcNAcylation at Ser-75 by OGT increases stability of EZH2 and facilitates the formation of H3K27me3 by the PRC2/EED-EZH2 complex. As to expression, in the ovary, expressed in primordial follicles and oocytes and also in external follicle cells (at protein level). Expressed in many tissues. Overexpressed in numerous tumor types including carcinomas of the breast, colon, larynx, lymphoma and testis.

The protein localises to the nucleus. The enzyme catalyses L-lysyl(27)-[histone H3] + 3 S-adenosyl-L-methionine = N(6),N(6),N(6)-trimethyl-L-lysyl(27)-[histone H3] + 3 S-adenosyl-L-homocysteine + 3 H(+). Its function is as follows. Polycomb group (PcG) protein. Catalytic subunit of the PRC2/EED-EZH2 complex, which methylates 'Lys-9' (H3K9me) and 'Lys-27' (H3K27me) of histone H3, leading to transcriptional repression of the affected target gene. Able to mono-, di- and trimethylate 'Lys-27' of histone H3 to form H3K27me1, H3K27me2 and H3K27me3, respectively. Displays a preference for substrates with less methylation, loses activity when progressively more methyl groups are incorporated into H3K27, H3K27me0 &gt; H3K27me1 &gt; H3K27me2. Compared to EZH1-containing complexes, it is more abundant in embryonic stem cells and plays a major role in forming H3K27me3, which is required for embryonic stem cell identity and proper differentiation. The PRC2/EED-EZH2 complex may also serve as a recruiting platform for DNA methyltransferases, thereby linking two epigenetic repression systems. Genes repressed by the PRC2/EED-EZH2 complex include HOXC8, HOXA9, MYT1, CDKN2A and retinoic acid target genes. EZH2 can also methylate non-histone proteins such as the transcription factor GATA4 and the nuclear receptor RORA. Regulates the circadian clock via histone methylation at the promoter of the circadian genes. Essential for the CRY1/2-mediated repression of the transcriptional activation of PER1/2 by the CLOCK-BMAL1 heterodimer; involved in the di and trimethylation of 'Lys-27' of histone H3 on PER1/2 promoters which is necessary for the CRY1/2 proteins to inhibit transcription. This chain is Histone-lysine N-methyltransferase EZH2, found in Homo sapiens (Human).